We begin with the raw amino-acid sequence, 442 residues long: tRNA modification GTPase MnmE (442 aa).

(6S)-5-formyl-5,6,7,8-tetrahydrofolate is bound by residues Arg24, Glu82, and Lys122. The 148-residue stretch at 219–366 (GFKVALVGEP…LRRALKREIE (148 aa)) folds into the TrmE-type G domain. Asn229 serves as a coordination point for K(+). GTP is bound by residues 229 to 234 (NAGKST), 248 to 254 (TDIAGTT), and 273 to 276 (DTAG). A Mg(2+)-binding site is contributed by Ser233. 3 residues coordinate K(+): Thr248, Ile250, and Thr253. Mg(2+) is bound at residue Thr254. Lys442 lines the (6S)-5-formyl-5,6,7,8-tetrahydrofolate pocket.

The protein belongs to the TRAFAC class TrmE-Era-EngA-EngB-Septin-like GTPase superfamily. TrmE GTPase family. Homodimer. Heterotetramer of two MnmE and two MnmG subunits. The cofactor is K(+).

It is found in the cytoplasm. Functionally, exhibits a very high intrinsic GTPase hydrolysis rate. Involved in the addition of a carboxymethylaminomethyl (cmnm) group at the wobble position (U34) of certain tRNAs, forming tRNA-cmnm(5)s(2)U34. This chain is tRNA modification GTPase MnmE, found in Agrobacterium fabrum (strain C58 / ATCC 33970) (Agrobacterium tumefaciens (strain C58)).